Here is a 237-residue protein sequence, read N- to C-terminus: Phosphatidylserine decarboxylase proenzyme (237 aa).

The Schiff-base intermediate with substrate; via pyruvic acid role is filled by serine 206. At serine 206 the chain carries Pyruvic acid (Ser); by autocatalysis.

This sequence belongs to the phosphatidylserine decarboxylase family. PSD-A subfamily. As to quaternary structure, heterodimer of a large membrane-associated beta subunit and a small pyruvoyl-containing alpha subunit. Requires pyruvate as cofactor. Is synthesized initially as an inactive proenzyme. Formation of the active enzyme involves a self-maturation process in which the active site pyruvoyl group is generated from an internal serine residue via an autocatalytic post-translational modification. Two non-identical subunits are generated from the proenzyme in this reaction, and the pyruvate is formed at the N-terminus of the alpha chain, which is derived from the carboxyl end of the proenzyme. The post-translation cleavage follows an unusual pathway, termed non-hydrolytic serinolysis, in which the side chain hydroxyl group of the serine supplies its oxygen atom to form the C-terminus of the beta chain, while the remainder of the serine residue undergoes an oxidative deamination to produce ammonia and the pyruvoyl prosthetic group on the alpha chain.

It localises to the cell membrane. It carries out the reaction a 1,2-diacyl-sn-glycero-3-phospho-L-serine + H(+) = a 1,2-diacyl-sn-glycero-3-phosphoethanolamine + CO2. The protein operates within phospholipid metabolism; phosphatidylethanolamine biosynthesis; phosphatidylethanolamine from CDP-diacylglycerol: step 2/2. Functionally, catalyzes the formation of phosphatidylethanolamine (PtdEtn) from phosphatidylserine (PtdSer). The sequence is that of Phosphatidylserine decarboxylase proenzyme from Rhodococcus opacus (strain B4).